The following is a 692-amino-acid chain: Elongation factor G (692 aa).

Residues D9 to L283 form the tr-type G domain. Residues A18 to T25, D82 to H86, and N136 to D139 contribute to the GTP site.

This sequence belongs to the TRAFAC class translation factor GTPase superfamily. Classic translation factor GTPase family. EF-G/EF-2 subfamily.

The protein resides in the cytoplasm. Functionally, catalyzes the GTP-dependent ribosomal translocation step during translation elongation. During this step, the ribosome changes from the pre-translocational (PRE) to the post-translocational (POST) state as the newly formed A-site-bound peptidyl-tRNA and P-site-bound deacylated tRNA move to the P and E sites, respectively. Catalyzes the coordinated movement of the two tRNA molecules, the mRNA and conformational changes in the ribosome. This chain is Elongation factor G (fusA), found in Thermotoga maritima (strain ATCC 43589 / DSM 3109 / JCM 10099 / NBRC 100826 / MSB8).